The following is a 192-amino-acid chain: uncharacterized protein (192 aa).

A Nudix hydrolase domain is found at 29-160; sequence HRQAAVLIPI…PLDIYRRGDS (132 aa). The Nudix box motif lies at 67–89; it reads GAVDDTDASAIAAALREAEEEVA. Positions 83 and 87 each coordinate Mg(2+).

The protein belongs to the Nudix hydrolase family. PCD1 subfamily. The cofactor is Mn(2+). Mg(2+) is required as a cofactor.

In terms of biological role, probably mediates the hydrolysis of some nucleoside diphosphate derivatives. This is an uncharacterized protein from Escherichia coli (strain K12).